A 551-amino-acid chain; its full sequence is Chitinase (551 aa).

The signal sequence occupies residues Met-1–Ala-17. Positions Met-1 to Ile-149 are chitin binding domain (CBD). Residues Lys-148–Lys-548 form the GH18 domain. Asn-173 is a glycosylation site (N-linked (GlcNAc...) asparagine; by host). Glu-305 functions as the Proton donor in the catalytic mechanism. Residue Asn-444 is glycosylated (N-linked (GlcNAc...) asparagine; by host). The short motif at Lys-548 to Leu-551 is the Prevents secretion from ER element.

Belongs to the glycosyl hydrolase 18 family. Chitinase class II subfamily. Interacts with host VCATH.

The protein localises to the host endoplasmic reticulum lumen. It catalyses the reaction Random endo-hydrolysis of N-acetyl-beta-D-glucosaminide (1-&gt;4)-beta-linkages in chitin and chitodextrins.. Plays a role in host liquefaction to facilitate horizontal transmission of the virus by hydrolyzing beta-chitin and by regulating the cysteine protease VCATH. Localized in the host reticulum endoplasmic via its KDEL motif, interacts with and thus prevents VCATH secretion before host cell lysis occurs. This is Chitinase (CHIA) from Lepidoptera (butterflies and moths).